Here is a 376-residue protein sequence, read N- to C-terminus: PqqA peptide cyclase (376 aa).

The Radical SAM core domain maps to 7-222 (VGLPLWLLAE…TNEYRDKLKA (216 aa)). [4Fe-4S] cluster contacts are provided by C21, C25, and C28.

The protein belongs to the radical SAM superfamily. PqqE family. In terms of assembly, interacts with PqqD. The interaction is necessary for activity of PqqE. The cofactor is [4Fe-4S] cluster.

The enzyme catalyses [PQQ precursor protein] + S-adenosyl-L-methionine = E-Y cross-linked-[PQQ precursor protein] + 5'-deoxyadenosine + L-methionine + H(+). Its pathway is cofactor biosynthesis; pyrroloquinoline quinone biosynthesis. Catalyzes the cross-linking of a glutamate residue and a tyrosine residue in the PqqA protein as part of the biosynthesis of pyrroloquinoline quinone (PQQ). In Pseudomonas putida (strain ATCC 47054 / DSM 6125 / CFBP 8728 / NCIMB 11950 / KT2440), this protein is PqqA peptide cyclase.